The chain runs to 81 residues: Metallocarboxypeptidase inhibitor (81 aa).

An N-terminal signal peptide occupies residues Met-1–Ser-15. 4 disulfide bridges follow: Cys-25–Cys-48, Cys-32–Cys-76, Cys-33–Cys-57, and Cys-36–Cys-72.

Tightly binding, competitive inhibitor of different types of pancreatic-like carboxypeptidases. Inhibits human CPA4. In Hirudo medicinalis (Medicinal leech), this protein is Metallocarboxypeptidase inhibitor.